A 155-amino-acid chain; its full sequence is Endoribonuclease YbeY (155 aa).

His-117, His-121, and His-127 together coordinate Zn(2+).

Belongs to the endoribonuclease YbeY family. Zn(2+) is required as a cofactor.

It localises to the cytoplasm. In terms of biological role, single strand-specific metallo-endoribonuclease involved in late-stage 70S ribosome quality control and in maturation of the 3' terminus of the 16S rRNA. This chain is Endoribonuclease YbeY, found in Dichelobacter nodosus (strain VCS1703A).